Here is a 218-residue protein sequence, read N- to C-terminus: Octanoyltransferase (218 aa).

In terms of domain architecture, BPL/LPL catalytic spans 31–206 (EETPDEVWLV…ELVNLLGYEQ (176 aa)). Substrate contacts are provided by residues 70-77 (RGGQVTYH), 137-139 (SLG), and 150-152 (GLA). Cys-168 serves as the catalytic Acyl-thioester intermediate.

It belongs to the LipB family.

Its subcellular location is the cytoplasm. The enzyme catalyses octanoyl-[ACP] + L-lysyl-[protein] = N(6)-octanoyl-L-lysyl-[protein] + holo-[ACP] + H(+). It participates in protein modification; protein lipoylation via endogenous pathway; protein N(6)-(lipoyl)lysine from octanoyl-[acyl-carrier-protein]: step 1/2. In terms of biological role, catalyzes the transfer of endogenously produced octanoic acid from octanoyl-acyl-carrier-protein onto the lipoyl domains of lipoate-dependent enzymes. Lipoyl-ACP can also act as a substrate although octanoyl-ACP is likely to be the physiological substrate. In Vibrio vulnificus (strain YJ016), this protein is Octanoyltransferase.